The chain runs to 197 residues: FMN-dependent NADH:quinone oxidoreductase (197 aa).

FMN is bound at residue serine 10.

It belongs to the azoreductase type 1 family. Homodimer. Requires FMN as cofactor.

It carries out the reaction 2 a quinone + NADH + H(+) = 2 a 1,4-benzosemiquinone + NAD(+). The catalysed reaction is N,N-dimethyl-1,4-phenylenediamine + anthranilate + 2 NAD(+) = 2-(4-dimethylaminophenyl)diazenylbenzoate + 2 NADH + 2 H(+). Functionally, quinone reductase that provides resistance to thiol-specific stress caused by electrophilic quinones. Its function is as follows. Also exhibits azoreductase activity. Catalyzes the reductive cleavage of the azo bond in aromatic azo compounds to the corresponding amines. In Mycoplasma genitalium (strain ATCC 33530 / DSM 19775 / NCTC 10195 / G37) (Mycoplasmoides genitalium), this protein is FMN-dependent NADH:quinone oxidoreductase.